The chain runs to 173 residues: Crossover junction endodeoxyribonuclease RuvC (173 aa).

Catalysis depends on residues aspartate 8, glutamate 69, and aspartate 141. Residues aspartate 8, glutamate 69, and aspartate 141 each contribute to the Mg(2+) site.

This sequence belongs to the RuvC family. Homodimer which binds Holliday junction (HJ) DNA. The HJ becomes 2-fold symmetrical on binding to RuvC with unstacked arms; it has a different conformation from HJ DNA in complex with RuvA. In the full resolvosome a probable DNA-RuvA(4)-RuvB(12)-RuvC(2) complex forms which resolves the HJ. The cofactor is Mg(2+).

The protein localises to the cytoplasm. The enzyme catalyses Endonucleolytic cleavage at a junction such as a reciprocal single-stranded crossover between two homologous DNA duplexes (Holliday junction).. In terms of biological role, the RuvA-RuvB-RuvC complex processes Holliday junction (HJ) DNA during genetic recombination and DNA repair. Endonuclease that resolves HJ intermediates. Cleaves cruciform DNA by making single-stranded nicks across the HJ at symmetrical positions within the homologous arms, yielding a 5'-phosphate and a 3'-hydroxyl group; requires a central core of homology in the junction. The consensus cleavage sequence is 5'-(A/T)TT(C/G)-3'. Cleavage occurs on the 3'-side of the TT dinucleotide at the point of strand exchange. HJ branch migration catalyzed by RuvA-RuvB allows RuvC to scan DNA until it finds its consensus sequence, where it cleaves and resolves the cruciform DNA. In Xylella fastidiosa (strain Temecula1 / ATCC 700964), this protein is Crossover junction endodeoxyribonuclease RuvC.